A 541-amino-acid polypeptide reads, in one-letter code: Protopine 6-monooxygenase (541 aa).

Residues 9 to 29 (LLLNTWISAYSMAALLALVLV) traverse the membrane as a helical segment. Cys-476 provides a ligand contact to heme.

The protein belongs to the cytochrome P450 family. The cofactor is heme.

Its subcellular location is the endoplasmic reticulum membrane. It carries out the reaction protopine + reduced [NADPH--hemoprotein reductase] + O2 = 6-hydroxyprotopine + oxidized [NADPH--hemoprotein reductase] + H2O + H(+). It functions in the pathway alkaloid biosynthesis. In terms of biological role, catalyzes the conversion of protopine and allocryptopine to dihydrosanguinarine and dihydrochelerythrine, respectively, in the biosynthesis of isoquinoline alkaloid sanguinarine. The polypeptide is Protopine 6-monooxygenase (CYP82N3) (Papaver somniferum (Opium poppy)).